Reading from the N-terminus, the 184-residue chain is Large ribosomal subunit protein uL6 (184 aa).

It belongs to the universal ribosomal protein uL6 family. As to quaternary structure, part of the 50S ribosomal subunit.

Functionally, this protein binds to the 23S rRNA, and is important in its secondary structure. It is located near the subunit interface in the base of the L7/L12 stalk, and near the tRNA binding site of the peptidyltransferase center. This is Large ribosomal subunit protein uL6 from Thermotoga maritima (strain ATCC 43589 / DSM 3109 / JCM 10099 / NBRC 100826 / MSB8).